A 328-amino-acid polypeptide reads, in one-letter code: Ketol-acid reductoisomerase (NADP(+)) (328 aa).

The 181-residue stretch at 2–182 folds into the KARI N-terminal Rossmann domain; it reads AKIYTDREAS…GATRAGVIET (181 aa). NADP(+)-binding positions include 25-28, Arg48, Ser53, and 83-86; these read YGIQ and DMEQ. His108 is a catalytic residue. Residue Gly134 participates in NADP(+) binding. The KARI C-terminal knotted domain occupies 183-328; the sequence is TFAEETETDL…EEMRKLLFGP (146 aa). The Mg(2+) site is built by Asp191, Glu195, Glu227, and Glu231. Ser252 is a substrate binding site.

Belongs to the ketol-acid reductoisomerase family. Mg(2+) is required as a cofactor.

It catalyses the reaction (2R)-2,3-dihydroxy-3-methylbutanoate + NADP(+) = (2S)-2-acetolactate + NADPH + H(+). The enzyme catalyses (2R,3R)-2,3-dihydroxy-3-methylpentanoate + NADP(+) = (S)-2-ethyl-2-hydroxy-3-oxobutanoate + NADPH + H(+). It functions in the pathway amino-acid biosynthesis; L-isoleucine biosynthesis; L-isoleucine from 2-oxobutanoate: step 2/4. It participates in amino-acid biosynthesis; L-valine biosynthesis; L-valine from pyruvate: step 2/4. Functionally, involved in the biosynthesis of branched-chain amino acids (BCAA). Catalyzes an alkyl-migration followed by a ketol-acid reduction of (S)-2-acetolactate (S2AL) to yield (R)-2,3-dihydroxy-isovalerate. In the isomerase reaction, S2AL is rearranged via a Mg-dependent methyl migration to produce 3-hydroxy-3-methyl-2-ketobutyrate (HMKB). In the reductase reaction, this 2-ketoacid undergoes a metal-dependent reduction by NADPH to yield (R)-2,3-dihydroxy-isovalerate. The polypeptide is Ketol-acid reductoisomerase (NADP(+)) (Pyrobaculum aerophilum (strain ATCC 51768 / DSM 7523 / JCM 9630 / CIP 104966 / NBRC 100827 / IM2)).